The chain runs to 450 residues: WD repeat-containing protein ATCSA-1 (450 aa).

4 WD repeats span residues 41 to 81 (PHRG…DYEA), 101 to 141 (GHKY…AVVD), 148 to 185 (VYRT…FSHT), and 188 to 228 (GHRD…CFRV). Residues 269 to 298 (LQSKQTGSQSVKGSSSAKASVEKSRQKRIH) form a disordered region. Low complexity predominate over residues 271 to 287 (SKQTGSQSVKGSSSAKA). WD repeat units lie at residues 310–349 (AHYG…NTLV) and 397–436 (GHYE…EDEM).

Interacts with DDB1A. In terms of tissue distribution, expressed in roots, leaves, stems, flowers and siliques.

The protein localises to the nucleus. Functionally, involved in UV-B tolerance and genome integrity. In association with DDB2, is necessary for repair of UV-B-induced DNA lesions. This Arabidopsis thaliana (Mouse-ear cress) protein is WD repeat-containing protein ATCSA-1.